Reading from the N-terminus, the 299-residue chain is J domain-containing protein CG6693 (299 aa).

Residues 15-82 (DVYKLMELAR…QKRALYDEQG (68 aa)) form the J domain. The residue at position 239 (S239) is a Phosphoserine. Positions 266–299 (FEKKKKKSKKPAAKQETKPKLNGVKAGRVEKGKN) are disordered. Positions 268 to 277 (KKKKKSKKPA) are enriched in basic residues.

The polypeptide is J domain-containing protein CG6693 (Drosophila melanogaster (Fruit fly)).